The sequence spans 334 residues: MNERMVDQSMHSEETDFELSLRPTRLRQYIGQNSIKSNLEVFIKAAKLRHEPLDHVLLFGPPGLGKTTLSNIIANEMEVNIRTVSGPSLERPGDLAAILSGLQPGDVLFIDEIHRLSSVVEEVLYPAMEDFFLDIIIGKGDEARSIRIDLPPFTLVGATTRAGSLTGPLRDRFGVHLRLEYYNESDLKEIIIRTAEVLGTGIDDESAIELAKRSRGTPRVANRLLKRVRDFQQVNEDEQIYIETTKHALGLLQVDQHGLDYIDHKMMNCIIKQYNGGPVGLDTIAVTIGEERITIEDVYEPFLIQKGFLERTPRGRKATPLAYGHFAKSNEERE.

The tract at residues 1 to 182 is large ATPase domain (RuvB-L); the sequence is MNERMVDQSM…FGVHLRLEYY (182 aa). ATP-binding positions include Leu21, Arg22, Gly63, Lys66, Thr67, Thr68, 129 to 131, Arg172, Tyr182, and Arg219; that span reads EDF. Residue Thr67 coordinates Mg(2+). Residues 183–253 are small ATPAse domain (RuvB-S); that stretch reads NESDLKEIII…TTKHALGLLQ (71 aa). The segment at 256–334 is head domain (RuvB-H); the sequence is QHGLDYIDHK…HFAKSNEERE (79 aa). Positions 292, 311, and 316 each coordinate DNA.

This sequence belongs to the RuvB family. In terms of assembly, homohexamer. Forms an RuvA(8)-RuvB(12)-Holliday junction (HJ) complex. HJ DNA is sandwiched between 2 RuvA tetramers; dsDNA enters through RuvA and exits via RuvB. An RuvB hexamer assembles on each DNA strand where it exits the tetramer. Each RuvB hexamer is contacted by two RuvA subunits (via domain III) on 2 adjacent RuvB subunits; this complex drives branch migration. In the full resolvosome a probable DNA-RuvA(4)-RuvB(12)-RuvC(2) complex forms which resolves the HJ.

It localises to the cytoplasm. The catalysed reaction is ATP + H2O = ADP + phosphate + H(+). The RuvA-RuvB-RuvC complex processes Holliday junction (HJ) DNA during genetic recombination and DNA repair, while the RuvA-RuvB complex plays an important role in the rescue of blocked DNA replication forks via replication fork reversal (RFR). RuvA specifically binds to HJ cruciform DNA, conferring on it an open structure. The RuvB hexamer acts as an ATP-dependent pump, pulling dsDNA into and through the RuvAB complex. RuvB forms 2 homohexamers on either side of HJ DNA bound by 1 or 2 RuvA tetramers; 4 subunits per hexamer contact DNA at a time. Coordinated motions by a converter formed by DNA-disengaged RuvB subunits stimulates ATP hydrolysis and nucleotide exchange. Immobilization of the converter enables RuvB to convert the ATP-contained energy into a lever motion, pulling 2 nucleotides of DNA out of the RuvA tetramer per ATP hydrolyzed, thus driving DNA branch migration. The RuvB motors rotate together with the DNA substrate, which together with the progressing nucleotide cycle form the mechanistic basis for DNA recombination by continuous HJ branch migration. Branch migration allows RuvC to scan DNA until it finds its consensus sequence, where it cleaves and resolves cruciform DNA. This Staphylococcus aureus (strain bovine RF122 / ET3-1) protein is Holliday junction branch migration complex subunit RuvB.